Reading from the N-terminus, the 1021-residue chain is INO80 complex subunit D (1021 aa).

A Glycyl lysine isopeptide (Lys-Gly) (interchain with G-Cter in SUMO2) cross-link involves residue lysine 87. Phosphoserine is present on serine 132. Disordered regions lie at residues 194–239 (FSTP…PMQG), 514–570 (RGDN…SMPT), 808–844 (RQQYSSDHSHSSPHGSHYDSEHVPSPYSDHITSPHTS), 911–940 (SLSTPPTTSNSETTQPAFATVTPSSSSVLP), and 976–1021 (QLSS…PSPN). Residues 224 to 239 (VCKSPQPQNTSLPMQG) show a composition bias toward polar residues. The span at 520-554 (KVQHQQQRKPRKKTKPPALTKKHKKKRRRGPRRPQ) shows a compositional bias: basic residues. The segment covering 911 to 926 (SLSTPPTTSNSETTQP) has biased composition (low complexity). Over residues 931 to 940 (VTPSSSSVLP) the composition is skewed to polar residues. Low complexity predominate over residues 995–1014 (APPTGFTATGATATSTNNAS).

It belongs to the INO80D family. Component of the chromatin remodeling INO80 complex; specifically part of a complex module associated with the N-terminus of INO80.

It is found in the nucleus. In terms of biological role, putative regulatory component of the chromatin remodeling INO80 complex which is involved in transcriptional regulation, DNA replication and probably DNA repair. The sequence is that of INO80 complex subunit D from Mus musculus (Mouse).